The following is a 23-amino-acid chain: Paralytic peptide 1 (23 aa).

Cysteines 7 and 19 form a disulfide.

It belongs to the GBP/PSP1/paralytic peptide family. In terms of tissue distribution, hemolymph.

In terms of biological role, causes rapid, rigid paralysis when injected into Lepidopteran larvae. The physiological role may be to reduce hemolymph loss following injury and promote wound healing. This Heliothis virescens (Tobacco budworm moth) protein is Paralytic peptide 1.